The sequence spans 155 residues: SsrA-binding protein (155 aa).

This sequence belongs to the SmpB family.

Its subcellular location is the cytoplasm. In terms of biological role, required for rescue of stalled ribosomes mediated by trans-translation. Binds to transfer-messenger RNA (tmRNA), required for stable association of tmRNA with ribosomes. tmRNA and SmpB together mimic tRNA shape, replacing the anticodon stem-loop with SmpB. tmRNA is encoded by the ssrA gene; the 2 termini fold to resemble tRNA(Ala) and it encodes a 'tag peptide', a short internal open reading frame. During trans-translation Ala-aminoacylated tmRNA acts like a tRNA, entering the A-site of stalled ribosomes, displacing the stalled mRNA. The ribosome then switches to translate the ORF on the tmRNA; the nascent peptide is terminated with the 'tag peptide' encoded by the tmRNA and targeted for degradation. The ribosome is freed to recommence translation, which seems to be the essential function of trans-translation. The chain is SsrA-binding protein from Bacillus cereus (strain B4264).